The following is a 115-amino-acid chain: Peptidyl-tRNA hydrolase (115 aa).

It belongs to the PTH2 family.

It is found in the cytoplasm. It carries out the reaction an N-acyl-L-alpha-aminoacyl-tRNA + H2O = an N-acyl-L-amino acid + a tRNA + H(+). In terms of biological role, the natural substrate for this enzyme may be peptidyl-tRNAs which drop off the ribosome during protein synthesis. This is Peptidyl-tRNA hydrolase from Methanocaldococcus jannaschii (strain ATCC 43067 / DSM 2661 / JAL-1 / JCM 10045 / NBRC 100440) (Methanococcus jannaschii).